Here is a 920-residue protein sequence, read N- to C-terminus: Zinc finger MIZ domain-containing protein 2 (920 aa).

Disordered stretches follow at residues 1 to 22 and 54 to 79; these read MNSM…GSFA and SQVL…VAGG. Over residues 60–79 the composition is skewed to low complexity; the sequence is PMGPAGSPSGSSMMPGVAGG. R111 carries the omega-N-methylarginine modification. Disordered regions lie at residues 243-265 and 286-391; these read GQRL…RQGV and PSTA…SPNQ. 2 positions are modified to asymmetric dimethylarginine: R245 and R262. Residues 295-304 show a composition bias toward pro residues; that stretch reads PGQPPAPSPS. Polar residues predominate over residues 334–354; it reads EQFNGQGASFNGGSVSYSQPG. Residues 366-379 are compositionally biased toward pro residues; that stretch reads PSSPLPGNPTPPMT. The segment covering 380–389 has biased composition (low complexity); the sequence is PSSSVPYMSP. Residues K402 and K457 each participate in a glycyl lysine isopeptide (Lys-Gly) (interchain with G-Cter in SUMO2) cross-link. An interaction with AR region spans residues 435-506; it reads PFRLQHNLAV…TIERGDNKTS (72 aa). An SP-RING-type zinc finger spans residues 585-671; it reads GEDGVEQTAI…IYIQNSDYEE (87 aa). Zn(2+) contacts are provided by C616, H618, C639, and C642. A Glycyl lysine isopeptide (Lys-Gly) (interchain with G-Cter in SUMO2) cross-link involves residue K692. The disordered stretch occupies residues 803–920; that stretch reads SQMAPAGHLD…DDLLSLFENN (118 aa). Low complexity predominate over residues 876 to 890; it reads AGEAPEPALDLLPEL. Residues 906–920 are compositionally biased toward polar residues; the sequence is PTNNNDDLLSLFENN.

As to quaternary structure, interacts with AR, SMARCA4/BRG1 and SMARCE1/BAF57. Interaction with either SMARCA4 and SMARCE1 enhances AR-mediated transcription. Expressed most abundantly in testis with lower levels in heart, brain, pancreas, prostate and ovary.

The protein localises to the nucleus. Its function is as follows. Increases ligand-dependent transcriptional activity of AR and other nuclear hormone receptors. This chain is Zinc finger MIZ domain-containing protein 2 (ZMIZ2), found in Homo sapiens (Human).